Consider the following 318-residue polypeptide: Mitochondrial thiamine pyrophosphate carrier (318 aa).

Solcar repeat units lie at residues 13–106 (NSKL…LTEL), 116–202 (HQFS…LKRA), and 214–309 (TGNL…FCNL). The next 5 membrane-spanning stretches (helical) occupy residues 19–39 (AVAG…LDVI), 87–107 (ILSI…TELL), 122–142 (FVCG…VDVL), 173–193 (VFYK…GLQF), and 220–240 (LLCG…LDLI). A Substrate recognition motif is present at residues 241–246 (KKRLQV). The helical transmembrane segment at 293 to 313 (ALSTGFMFFWYELFCNLFHCI) threads the bilayer.

Belongs to the mitochondrial carrier (TC 2.A.29) family.

It is found in the mitochondrion membrane. It carries out the reaction thiamine phosphate(out) + thiamine diphosphate(in) = thiamine phosphate(in) + thiamine diphosphate(out). Its function is as follows. Mitochondrial transporter mediating uptake of thiamine diphosphate into mitochondria. It is not clear if the antiporter activity is affected by the membrane potential or by the proton electrochemical gradient. In Mus musculus (Mouse), this protein is Mitochondrial thiamine pyrophosphate carrier (Slc25a19).